The sequence spans 226 residues: Enolase-phosphatase E1 (226 aa).

The protein belongs to the HAD-like hydrolase superfamily. MasA/MtnC family. Monomer. Requires Mg(2+) as cofactor.

The catalysed reaction is 5-methylsulfanyl-2,3-dioxopentyl phosphate + H2O = 1,2-dihydroxy-5-(methylsulfanyl)pent-1-en-3-one + phosphate. Its pathway is amino-acid biosynthesis; L-methionine biosynthesis via salvage pathway; L-methionine from S-methyl-5-thio-alpha-D-ribose 1-phosphate: step 3/6. The protein operates within amino-acid biosynthesis; L-methionine biosynthesis via salvage pathway; L-methionine from S-methyl-5-thio-alpha-D-ribose 1-phosphate: step 4/6. Functionally, bifunctional enzyme that catalyzes the enolization of 2,3-diketo-5-methylthiopentyl-1-phosphate (DK-MTP-1-P) into the intermediate 2-hydroxy-3-keto-5-methylthiopentenyl-1-phosphate (HK-MTPenyl-1-P), which is then dephosphorylated to form the acireductone 1,2-dihydroxy-3-keto-5-methylthiopentene (DHK-MTPene). In Shewanella sp. (strain MR-4), this protein is Enolase-phosphatase E1.